A 131-amino-acid chain; its full sequence is Large ribosomal subunit protein bL19 (131 aa).

Belongs to the bacterial ribosomal protein bL19 family.

This protein is located at the 30S-50S ribosomal subunit interface and may play a role in the structure and function of the aminoacyl-tRNA binding site. This is Large ribosomal subunit protein bL19 from Caulobacter sp. (strain K31).